Consider the following 497-residue polypeptide: Protein DETOXIFICATION 25 (497 aa).

Transmembrane regions (helical) follow at residues 43–63, 70–90, 121–141, 157–177, 186–206, 216–236, 261–281, 291–311, 339–359, 381–401, 416–436, and 438–458; these read LPSTLFRVMSFGCVVVAQAFI, GLAAYALLQSTFIRFIYGIMA, IVDTFIATLFVPFIVLAGPIL, IYPWVIPYLYSIVFTMTMQMY, IIGILSTLALVLDIAATWWCV, ALLGLNISSWSVAIAEFVYVF, LSISSGFMLCLEYWYMSIIVL, IAISAFSICQYIYSWEMNICF, VVLVVSAVIGVICSALCLAFG, IVLSISILFNIIQPILSGVAI, SYYAIGVPLGVLLVYVFNFGI, and GLWSGMLAGVGIQTLILCYVI.

Belongs to the multi antimicrobial extrusion (MATE) (TC 2.A.66.1) family.

Its subcellular location is the membrane. The sequence is that of Protein DETOXIFICATION 25 from Arabidopsis thaliana (Mouse-ear cress).